Consider the following 294-residue polypeptide: Glycine--tRNA ligase alpha subunit (294 aa).

The protein belongs to the class-II aminoacyl-tRNA synthetase family. As to quaternary structure, tetramer of two alpha and two beta subunits.

The protein localises to the cytoplasm. It catalyses the reaction tRNA(Gly) + glycine + ATP = glycyl-tRNA(Gly) + AMP + diphosphate. The polypeptide is Glycine--tRNA ligase alpha subunit (Polynucleobacter asymbioticus (strain DSM 18221 / CIP 109841 / QLW-P1DMWA-1) (Polynucleobacter necessarius subsp. asymbioticus)).